A 259-amino-acid polypeptide reads, in one-letter code: Dihydroorotate dehydrogenase B (NAD(+)), electron transfer subunit (259 aa).

An FAD-binding FR-type domain is found at 2-102 (MQKQNMIVVN…LGPLGHGFPV (101 aa)). FAD is bound by residues 53–56 (RPIS), 70–72 (LYR), and 77–78 (GT). The [2Fe-2S] cluster site is built by Cys221, Cys226, Cys229, and Cys246.

This sequence belongs to the PyrK family. In terms of assembly, heterotetramer of 2 PyrK and 2 PyrD type B subunits. It depends on [2Fe-2S] cluster as a cofactor. The cofactor is FAD.

The protein operates within pyrimidine metabolism; UMP biosynthesis via de novo pathway; orotate from (S)-dihydroorotate (NAD(+) route): step 1/1. In terms of biological role, responsible for channeling the electrons from the oxidation of dihydroorotate from the FMN redox center in the PyrD type B subunit to the ultimate electron acceptor NAD(+). This is Dihydroorotate dehydrogenase B (NAD(+)), electron transfer subunit from Bacillus mycoides (strain KBAB4) (Bacillus weihenstephanensis).